A 678-amino-acid polypeptide reads, in one-letter code: Methionine--tRNA ligase (678 aa).

Positions 18 to 28 match the 'HIGH' region motif; it reads PYANGPIHLGH. Residues cysteine 149, cysteine 152, cysteine 162, and cysteine 165 each coordinate Zn(2+). Positions 334–338 match the 'KMSKS' region motif; the sequence is KMSKS. Lysine 337 lines the ATP pocket. Residues 577-678 form the tRNA-binding domain; that stretch reads DFAKVDLRVA…SGATPGMRVM (102 aa).

It belongs to the class-I aminoacyl-tRNA synthetase family. MetG type 1 subfamily. Homodimer. Requires Zn(2+) as cofactor.

It is found in the cytoplasm. It carries out the reaction tRNA(Met) + L-methionine + ATP = L-methionyl-tRNA(Met) + AMP + diphosphate. In terms of biological role, is required not only for elongation of protein synthesis but also for the initiation of all mRNA translation through initiator tRNA(fMet) aminoacylation. The sequence is that of Methionine--tRNA ligase from Marinobacter nauticus (strain ATCC 700491 / DSM 11845 / VT8) (Marinobacter aquaeolei).